We begin with the raw amino-acid sequence, 462 residues long: Elongation factor 1-alpha 1 (462 aa).

Position 2 is a n,N,N-trimethylglycine (Gly2). The region spanning 5 to 242 is the tr-type G domain; it reads KTHINIVVIG…DCILPPTRPT (238 aa). The G1 stretch occupies residues 14–21; the sequence is GHVDSGKS. A GTP-binding site is contributed by 14–21; it reads GHVDSGKS. At Lys36 the chain carries N6,N6,N6-trimethyllysine; alternate. Lys36 carries the post-translational modification N6,N6-dimethyllysine; alternate. At Lys36 the chain carries N6-methyllysine; alternate. Lys55 bears the N6,N6-dimethyllysine mark. The segment at 70–74 is G2; the sequence is GITID. Lys79 carries the post-translational modification N6,N6,N6-trimethyllysine; by EEF1AKMT1. The segment at 91–94 is G3; the sequence is DAPG. 153-156 provides a ligand contact to GTP; that stretch reads NKMD. Residues 153–156 are G4; it reads NKMD. Residue Lys165 is modified to N6,N6,N6-trimethyllysine; alternate; by EEF1AKMT3. Lys165 is subject to N6,N6-dimethyllysine; alternate; by EEF1AKMT3. Residue Lys165 is modified to N6-acetyllysine; alternate. The residue at position 165 (Lys165) is an N6-methyllysine; alternate; by EEF1AKMT3. Lys172 bears the N6-acetyllysine mark. GTP is bound at residue 194–196; it reads SGW. Positions 194 to 196 are G5; sequence SGW. Lys273 bears the N6-acetyllysine mark. Ser300 carries the phosphoserine; by TGFBR1 modification. Glu301 bears the 5-glutamyl glycerylphosphorylethanolamine mark. Lys318 bears the N6,N6,N6-trimethyllysine; by EEF1AKMT2 mark. Glu374 carries the post-translational modification 5-glutamyl glycerylphosphorylethanolamine. A Glycyl lysine isopeptide (Lys-Gly) (interchain with G-Cter in ubiquitin) cross-link involves residue Lys385. Lys392 is subject to N6-acetyllysine; alternate. An N6-succinyllysine; alternate modification is found at Lys392. Thr432 bears the Phosphothreonine; by PASK mark. Lys439 is modified (N6-acetyllysine).

It belongs to the TRAFAC class translation factor GTPase superfamily. Classic translation factor GTPase family. EF-Tu/EF-1A subfamily. In terms of assembly, found in a nuclear export complex with XPO5, EEF1A1, Ran and aminoacylated tRNA. Interacts with PARP1 and TXK. Interacts with KARS1. May interact with ERGIC2. Interacts with IFIT1 (via TPR repeats 4-7). Interacts with DLC1, facilitating distribution to the membrane periphery and ruffles upon growth factor stimulation. Interacts with ZPR1; the interaction occurs in a epidermal growth factor (EGF)-dependent manner. Interacts with PPP1R16B. Interacts with SPHK1 and SPHK2; both interactions increase SPHK1 and SPHK2 kinase activity. Interacts with guanyl-nucleotide exchange factor EEF1B2. Interacts (via middle-region) with HTATIP2 (via N-terminus); the interaction is direct and competes with EEF1A1 binding to guanyl-nucleotide exchange factor EEF1B2, thereby inhibiting GDP for GTP exchange and reactivation of EEF1A1. Interacts with tRNA. ISGylated. Post-translationally, phosphorylated by TXK. Phosphorylation by PASK increases translation efficiency. Phosphorylated by ROCK2. Phosphorylation by TGFBR1 inhibits translation elongation. In terms of processing, trimethylated at Lys-79 by EEF1AKMT1. Methylated at Lys-165 by EEF1AKMT3, methylation by EEF1AKMT3 is dynamic as well as inducible by stress conditions, such as ER-stress, and plays a regulatory role on mRNA translation. Trimethylated at Lys-318 by EEF1AKMT2. Mono-, di-, and trimethylated at Lys-36 by EEF1AKMT4; trimethylated form is predominant. Methylation by EEF1AKMT4 contributes to the fine-tuning of translation rates for a subset of tRNAs. Trimethylated at Gly-2 by METTL13. Mono- and dimethylated at Lys-55 by METTL13; dimethylated form is predominant. Ubiquitinated at Lys-385 by RNF14 in response to ribosome collisions (ribosome stalling), leading to its degradation by the proteasome and rescue of stalled ribosomes.

The protein resides in the cytoplasm. It localises to the nucleus. Its subcellular location is the nucleolus. The protein localises to the cell membrane. It catalyses the reaction GTP + H2O = GDP + phosphate + H(+). Translation elongation factor that catalyzes the GTP-dependent binding of aminoacyl-tRNA (aa-tRNA) to the A-site of ribosomes during the elongation phase of protein synthesis. Base pairing between the mRNA codon and the aa-tRNA anticodon promotes GTP hydrolysis, releasing the aa-tRNA from EEF1A1 and allowing its accommodation into the ribosome. The growing protein chain is subsequently transferred from the P-site peptidyl tRNA to the A-site aa-tRNA, extending it by one amino acid through ribosome-catalyzed peptide bond formation. Also plays a role in the positive regulation of IFNG transcription in T-helper 1 cells as part of an IFNG promoter-binding complex with TXK and PARP1. Also plays a role in cytoskeleton organization by promoting actin bundling. The sequence is that of Elongation factor 1-alpha 1 (EEF1A1) from Equus caballus (Horse).